The chain runs to 248 residues: Tetrachloro-P-hydroquinone reductive dehalogenase (248 aa).

The 83-residue stretch at 2 to 84 (PEVSLYNYTM…EAAKLGKVGI (83 aa)) folds into the GST N-terminal domain. The GST C-terminal domain occupies 133 to 248 (YAEKYPELRS…RVMPNWKGGI (116 aa)).

This sequence belongs to the GST superfamily. In terms of assembly, homodimer.

The catalysed reaction is 2,6-dichlorohydroquinone + glutathione disulfide + chloride + H(+) = 2,3,6-trichlorohydroquinone + 2 glutathione. The enzyme catalyses 2,3,6-trichlorohydroquinone + glutathione disulfide + chloride = 2,3,5,6-tetrachlorohydroquinone + 2 glutathione. Its pathway is xenobiotic degradation; pentachlorophenol degradation. Functionally, sequential reduction of tetrachloro-p-hydroquinone to monochlorophenol, using glutathione as the reducing agent. The polypeptide is Tetrachloro-P-hydroquinone reductive dehalogenase (pcpC) (Sphingobium chlorophenolicum).